A 252-amino-acid chain; its full sequence is Imidazole glycerol phosphate synthase subunit HisF (252 aa).

Residues D11 and D130 contribute to the active site.

This sequence belongs to the HisA/HisF family. In terms of assembly, heterodimer of HisH and HisF.

The protein localises to the cytoplasm. It catalyses the reaction 5-[(5-phospho-1-deoxy-D-ribulos-1-ylimino)methylamino]-1-(5-phospho-beta-D-ribosyl)imidazole-4-carboxamide + L-glutamine = D-erythro-1-(imidazol-4-yl)glycerol 3-phosphate + 5-amino-1-(5-phospho-beta-D-ribosyl)imidazole-4-carboxamide + L-glutamate + H(+). It functions in the pathway amino-acid biosynthesis; L-histidine biosynthesis; L-histidine from 5-phospho-alpha-D-ribose 1-diphosphate: step 5/9. Its function is as follows. IGPS catalyzes the conversion of PRFAR and glutamine to IGP, AICAR and glutamate. The HisF subunit catalyzes the cyclization activity that produces IGP and AICAR from PRFAR using the ammonia provided by the HisH subunit. In Moorella thermoacetica (strain ATCC 39073 / JCM 9320), this protein is Imidazole glycerol phosphate synthase subunit HisF.